The following is a 430-amino-acid chain: Sulfide-quinone reductase (430 aa).

FAD-binding positions include 9 to 13, 34 to 36, 42 to 43, and threonine 105; these read GGGVG, SDR, and TP. Residue cysteine 156 is the Cysteine persulfide intermediate of the active site. 2 disulfides stabilise this stretch: cysteine 280-cysteine 422 and cysteine 419-cysteine 430. FAD contacts are provided by valine 294 and glycine 314. Residue isoleucine 346 participates in a quinone binding. Cysteine 347 serves as the catalytic Cysteine persulfide intermediate. Position 382 (lysine 382) interacts with FAD.

Belongs to the SQRD family. Homotrimer. Requires FAD as cofactor.

It localises to the membrane. The enzyme catalyses n a quinone + n hydrogen sulfide + n H(+) = polysulfur(n-2) + n a quinol. Its function is as follows. Catalyzes the oxidation of hydrogen sulfide, with the help of a quinone. Consecutive reaction cycles lead to the accumulation of a polysulfide product on the active site Cys residues; these products are released when they exceed a critical length, typically as cyclooctasulfur. This chain is Sulfide-quinone reductase, found in Aquifex aeolicus (strain VF5).